A 185-amino-acid polypeptide reads, in one-letter code: Elongation factor P (185 aa).

It belongs to the elongation factor P family.

It localises to the cytoplasm. It functions in the pathway protein biosynthesis; polypeptide chain elongation. Its function is as follows. Involved in peptide bond synthesis. Stimulates efficient translation and peptide-bond synthesis on native or reconstituted 70S ribosomes in vitro. Probably functions indirectly by altering the affinity of the ribosome for aminoacyl-tRNA, thus increasing their reactivity as acceptors for peptidyl transferase. The chain is Elongation factor P from Mesomycoplasma hyopneumoniae (strain J / ATCC 25934 / NCTC 10110) (Mycoplasma hyopneumoniae).